Consider the following 116-residue polypeptide: Large ribosomal subunit protein bL17 (116 aa).

This sequence belongs to the bacterial ribosomal protein bL17 family. Part of the 50S ribosomal subunit. Contacts protein L32.

This Prochlorococcus marinus (strain MIT 9215) protein is Large ribosomal subunit protein bL17.